A 575-amino-acid chain; its full sequence is Phosphoenolpyruvate-protein phosphotransferase (575 aa).

His-191 serves as the catalytic Tele-phosphohistidine intermediate. Residues Arg-298 and Arg-334 each coordinate phosphoenolpyruvate. Glu-435 and Asp-459 together coordinate Mg(2+). Phosphoenolpyruvate is bound by residues 458–459 (ND) and Arg-469. The active-site Proton donor is the Cys-506.

This sequence belongs to the PEP-utilizing enzyme family. In terms of assembly, homodimer. The cofactor is Mg(2+).

The protein localises to the cytoplasm. The enzyme catalyses L-histidyl-[protein] + phosphoenolpyruvate = N(pros)-phospho-L-histidyl-[protein] + pyruvate. In terms of biological role, general (non sugar-specific) component of the phosphoenolpyruvate-dependent sugar phosphotransferase system (sugar PTS). This major carbohydrate active-transport system catalyzes the phosphorylation of incoming sugar substrates concomitantly with their translocation across the cell membrane. Enzyme I transfers the phosphoryl group from phosphoenolpyruvate (PEP) to the phosphoryl carrier protein (HPr). The polypeptide is Phosphoenolpyruvate-protein phosphotransferase (ptsI) (Lactococcus lactis subsp. cremoris (Streptococcus cremoris)).